Reading from the N-terminus, the 207-residue chain is Casparian strip membrane protein 1 (207 aa).

The segment covering 1 to 12 (MEGESTAVNITE) has biased composition (polar residues). The tract at residues 1–24 (MEGESTAVNITETPKERKGKAPLL) is disordered. At 1–48 (MEGESTAVNITETPKERKGKAPLLAPPPASGGIKTIVQKAPKGGYKRG) the chain is on the cytoplasmic side. Residues 49-69 (LAVFDVVLRIAGIAAALGAVI) traverse the membrane as a helical segment. Topologically, residues 70 to 98 (AMGSTDQTLPFFTQFFQFKAEFDDLPVFT) are extracellular. A helical membrane pass occupies residues 99 to 119 (FFVIANAITAAYLALSIPISI). Over 120 to 138 (VCIIRPHLVGPRVLLTFLD) the chain is Cytoplasmic. Residues 139 to 159 (TVMVGLTTAAAGGAASIVYLA) traverse the membrane as a helical segment. Residues 160–184 (HNGNSDANWPAICQQFNDFCQEVSG) lie on the Extracellular side of the membrane. The chain crosses the membrane as a helical span at residues 185-205 (AVVASFITVVVLMFLIVLSAF). At 206-207 (SL) the chain is on the cytoplasmic side.

Belongs to the Casparian strip membrane proteins (CASP) family. Homodimer and heterodimers.

It localises to the cell membrane. In terms of biological role, regulates membrane-cell wall junctions and localized cell wall deposition. Required for establishment of the Casparian strip membrane domain (CSD) and the subsequent formation of Casparian strips, a cell wall modification of the root endodermis that determines an apoplastic barrier between the intraorganismal apoplasm and the extraorganismal apoplasm and prevents lateral diffusion. The sequence is that of Casparian strip membrane protein 1 from Taraxacum kok-saghyz (Russian dandelion).